The sequence spans 319 residues: Aspartate carbamoyltransferase catalytic subunit (319 aa).

Carbamoyl phosphate-binding residues include Arg-59 and Thr-60. Lys-87 is a binding site for L-aspartate. Positions 109, 137, and 140 each coordinate carbamoyl phosphate. Positions 170 and 224 each coordinate L-aspartate. Residues Gly-265 and Pro-266 each contribute to the carbamoyl phosphate site.

It belongs to the aspartate/ornithine carbamoyltransferase superfamily. ATCase family. Heterododecamer (2C3:3R2) of six catalytic PyrB chains organized as two trimers (C3), and six regulatory PyrI chains organized as three dimers (R2).

It catalyses the reaction carbamoyl phosphate + L-aspartate = N-carbamoyl-L-aspartate + phosphate + H(+). It functions in the pathway pyrimidine metabolism; UMP biosynthesis via de novo pathway; (S)-dihydroorotate from bicarbonate: step 2/3. In terms of biological role, catalyzes the condensation of carbamoyl phosphate and aspartate to form carbamoyl aspartate and inorganic phosphate, the committed step in the de novo pyrimidine nucleotide biosynthesis pathway. This chain is Aspartate carbamoyltransferase catalytic subunit, found in Gemmatimonas aurantiaca (strain DSM 14586 / JCM 11422 / NBRC 100505 / T-27).